The chain runs to 381 residues: 1-deoxy-D-xylulose 5-phosphate reductoisomerase (381 aa).

Residues serine 10, glycine 11, serine 12, isoleucine 13, glycine 36, lysine 37, asparagine 38, and asparagine 121 each contribute to the NADPH site. Lysine 122 is a 1-deoxy-D-xylulose 5-phosphate binding site. NADPH is bound at residue glutamate 123. Aspartate 147 contributes to the Mn(2+) binding site. Residues serine 148, glutamate 149, serine 173, and histidine 196 each coordinate 1-deoxy-D-xylulose 5-phosphate. Mn(2+) is bound at residue glutamate 149. Glycine 202 is a binding site for NADPH. 1-deoxy-D-xylulose 5-phosphate-binding residues include serine 209, asparagine 214, lysine 215, and glutamate 218. Residue glutamate 218 participates in Mn(2+) binding.

The protein belongs to the DXR family. Mg(2+) serves as cofactor. It depends on Mn(2+) as a cofactor.

The catalysed reaction is 2-C-methyl-D-erythritol 4-phosphate + NADP(+) = 1-deoxy-D-xylulose 5-phosphate + NADPH + H(+). It participates in isoprenoid biosynthesis; isopentenyl diphosphate biosynthesis via DXP pathway; isopentenyl diphosphate from 1-deoxy-D-xylulose 5-phosphate: step 1/6. Functionally, catalyzes the NADPH-dependent rearrangement and reduction of 1-deoxy-D-xylulose-5-phosphate (DXP) to 2-C-methyl-D-erythritol 4-phosphate (MEP). The chain is 1-deoxy-D-xylulose 5-phosphate reductoisomerase from Geobacillus sp. (strain WCH70).